A 141-amino-acid chain; its full sequence is Large ribosomal subunit protein uL11 (141 aa).

The protein belongs to the universal ribosomal protein uL11 family. Part of the ribosomal stalk of the 50S ribosomal subunit. Interacts with L10 and the large rRNA to form the base of the stalk. L10 forms an elongated spine to which L12 dimers bind in a sequential fashion forming a multimeric L10(L12)X complex. In terms of processing, one or more lysine residues are methylated.

In terms of biological role, forms part of the ribosomal stalk which helps the ribosome interact with GTP-bound translation factors. In Chlorobaculum tepidum (strain ATCC 49652 / DSM 12025 / NBRC 103806 / TLS) (Chlorobium tepidum), this protein is Large ribosomal subunit protein uL11.